The following is a 156-amino-acid chain: MGLSLLWALLQDMALAAVPALGFAMVFNVPLKVLPYCALLGGVGHGVRFLAMHFGMNIEWASFLAAILIGIIGIRWSRWLLAHPKVFTVAAVIPMFPGISAYTAMISVVEISHLGYSEALMSVMITNFLKASFIVGALSIGLSLPGIWLYRKRPGV.

The next 4 helical transmembrane spans lie at 7–27 (WALL…AMVF), 54–74 (FGMN…IIGI), 86–106 (VFTV…TAMI), and 128–148 (FLKA…PGIW).

It belongs to the ThrE exporter (TC 2.A.79) family. In terms of assembly, the transporter is composed of YjjB and YjjP.

The protein resides in the cell inner membrane. Functionally, involved in succinate export with YjjP. Both proteins are required for export. This is Probable succinate transporter subunit YjjB from Pectobacterium carotovorum subsp. carotovorum (strain PC1).